The primary structure comprises 234 residues: MSNHPLLQCINLCKRYQEGQLHTDVLRNVSFAIEPGELMAIVGSSGSGKSTLLHLLGGLDSPTSGEVIYQGRSLNQLSSTAKAELRNRELGFIYQFHHLLPDFTALENVAMPLLIGGSKPAEAQEKAHEMLAAVGLEKRSKHRPSELSGGERQRVAIARSLVNNPSLVLADEPTGNLDQRNADSIFNLLGELNVRQGTAFLVVTHDLQLAKRMSRQLEMRDGQLQHHLTLVGAE.

One can recognise an ABC transporter domain in the interval 7–233 (LQCINLCKRY…LQHHLTLVGA (227 aa)). 43–50 (GSSGSGKS) contacts ATP.

Belongs to the ABC transporter superfamily. Lipoprotein translocase (TC 3.A.1.125) family. The complex is composed of two ATP-binding proteins (LolD) and two transmembrane proteins (LolC and LolE).

The protein localises to the cell inner membrane. In terms of biological role, part of the ABC transporter complex LolCDE involved in the translocation of mature outer membrane-directed lipoproteins, from the inner membrane to the periplasmic chaperone, LolA. Responsible for the formation of the LolA-lipoprotein complex in an ATP-dependent manner. This chain is Lipoprotein-releasing system ATP-binding protein LolD, found in Yersinia pestis bv. Antiqua (strain Antiqua).